A 415-amino-acid chain; its full sequence is Small RNA 2'-O-methyltransferase (415 aa).

S-adenosyl-L-methionine-binding residues include Ser99 and Asp117. Residues Glu169, Glu172, and His173 each contribute to the Mg(2+) site.

Belongs to the methyltransferase superfamily. HEN1 family. It depends on Mg(2+) as a cofactor.

The protein resides in the cytoplasm. It catalyses the reaction small RNA 3'-end nucleotide + S-adenosyl-L-methionine = small RNA 3'-end 2'-O-methylnucleotide + S-adenosyl-L-homocysteine + H(+). Its function is as follows. Methyltransferase that adds a 2'-O-methyl group at the 3'-end of piRNAs, a class of 24 to 30 nucleotide RNAs that are generated by a Dicer-independent mechanism and are primarily derived from transposons and other repeated sequence elements. This probably protects the 3'-end of piRNAs from uridylation activity and subsequent degradation. Stabilization of piRNAs is essential for gametogenesis. The protein is Small RNA 2'-O-methyltransferase of Bombyx mori (Silk moth).